Reading from the N-terminus, the 174-residue chain is Phytochrome-interacting ankyrin-repeat protein 2 (174 aa).

Residues 1–13 (MLQEPSAAFSLRR) are compositionally biased toward low complexity. The segment at 1–29 (MLQEPSAAFSLRRNSFRRRSPRSNVDDRG) is disordered. Serine 15 bears the Phosphoserine mark. ANK repeat units lie at residues 28–57 (RGWN…DVNA), 65–94 (KGVS…NIDA), and 100–129 (CGWT…FLAD).

In terms of assembly, interacts with phytochrome A (PHYA), both in Pr and Pfr forms. Binds to PIF3, a repressor of photomorphogenesis in response to phytochrome-mediated light signaling; this interaction may trigger the repression of PHYA-mediated PIF3 phosphorylation. Interacts with SIGE/SIG5 in mitochondrion. Interacts with RPS9M (via C terminus). Post-translationally, phosphorylated by PHYA. In terms of tissue distribution, mostly expressed in flowers, cotyledons, leaves and siliques, and, to a lower extent, in roots and stems. Also detected at low levels in seedlings grown in continuous dark or light conditions. Expressed in male and female gametophytes.

The protein localises to the cytoplasm. Its subcellular location is the nucleus. It localises to the mitochondrion. In terms of biological role, promotes anthocyanin accumulation through interaction with PHYA, especially in response to far-red light, high light and sucrose treatment, probably by triggering A3G2XYLT/UF3GT expression. Required for gametophytes development as well as male-female gamete recognition during fertilization, possibly by regulating mitochondrial gene expression. Represses PHYA-mediated PIF3 phosphorylation. The chain is Phytochrome-interacting ankyrin-repeat protein 2 from Arabidopsis thaliana (Mouse-ear cress).